Consider the following 418-residue polypeptide: Ankyrin repeat domain-containing protein 61 (418 aa).

8 ANK repeats span residues 27 to 57, 74 to 103, 131 to 160, 166 to 195, 199 to 228, 233 to 272, 276 to 305, and 309 to 342; these read ALHSRLYEAIIKEDCDTIRTLLRNHPVNQPL, QPIFPIHLAAEYRKPQSLLCLLQHGADPEV, TRIQKILTDIQNNAVLCLRILCDHGAQVNA, NKHSPLHLAITYGTYPVLSFLAQNGAQVNA, SSMTPLHMAADILNKNMIETLIACGANVNC, TGNTALKLAVCTASSKAGRLLAAGVGCIRLLLNHGAQVNA, EGQTALHEACFGGREVIINLLLEFEANVNI, and NGESPIYMYLQRSSNIRDVTLLARLLYRTYPLRL.

In Rattus norvegicus (Rat), this protein is Ankyrin repeat domain-containing protein 61 (Ankrd61).